The following is a 565-amino-acid chain: MEPKTKKQRSLYIPYAGPVLLEFPLLNKGSAFSMEERRNFNLLGLLPEVVETIEEQAERAWIQYQGFKTEIDKHIYLRNIQDTNETLFYRLVNNHLDEMMPVIYTPTVGAACERFSEIYRRSRGVFISYQNRHNMDDILQNVPNHNIKVIVVTDGERILGLGDQGIGGMGIPIGKLSLYTACGGISPAYTLPVVLDVGTNNQQLLNDPLYMGWRNPRITDDEYYEFVDEFIQAVKQRWPDVLLQFEDFAQKNAMPLLNRYRNEICSFNDDIQGTAAVTVGTLIAASRAAGGQLSEKKIVFLGAGSAGCGIAEMIIAQTQREGLSEETARQKVFMVDRFGLLTDKMPNLLPFQTKLVQKRENLSDWDTDSDVLSLLDVVRNVKPDILIGVSGQTGLFTEEIIREMHKHCPRPIVMPLSNPTSRVEATPQDIIAWTEGNALVATGSPFNPVVWKDKIYPIAQCNNAFIFPGIGLGVIASGASRITDEMLMSASETLAQYSPLVLNGEGLVLPELKDIQKVSRAIAFAVGKMAQQQGVAVKTSAEALQQAIDDNFWQAEYRDYRRTSI.

The Proton donor role is filled by Y104. NAD(+) is bound at residue R157. K175 acts as the Proton acceptor in catalysis. A divalent metal cation contacts are provided by E246, D247, and D270. NAD(+)-binding residues include D270 and N418.

Belongs to the malic enzymes family. Homotetramer. Mg(2+) serves as cofactor. The cofactor is Mn(2+).

It carries out the reaction (S)-malate + NAD(+) = pyruvate + CO2 + NADH. It catalyses the reaction oxaloacetate + H(+) = pyruvate + CO2. In Escherichia coli (strain SMS-3-5 / SECEC), this protein is NAD-dependent malic enzyme.